The following is a 219-amino-acid chain: uncharacterized protein (219 aa).

The next 5 membrane-spanning stretches (helical) occupy residues 14–34 (LVYS…FGVL), 37–57 (TLGF…AGAS), 123–143 (FLLG…ALGV), 155–175 (VYSA…LPNL), and 189–209 (VALA…AALA).

Belongs to the AzlC family.

Its subcellular location is the cell membrane. This is an uncharacterized protein from Archaeoglobus fulgidus (strain ATCC 49558 / DSM 4304 / JCM 9628 / NBRC 100126 / VC-16).